Consider the following 422-residue polypeptide: Ubiquitin-conjugating enzyme E2 Q1 (422 aa).

N-acetylmethionine is present on Met1. A compositionally biased stretch (low complexity) spans 1-15 (MQQPQPQGQQQPGPG). Disordered regions lie at residues 1 to 40 (MQQPQPQGQQQPGPGQQLGGQGAAPGAGGGPGGGPGPGPC) and 174 to 221 (PLPA…EDDG). Over residues 16–35 (QQLGGQGAAPGAGGGPGGGP) the composition is skewed to gly residues. Over residues 185–200 (VSSEDEDEEMPEDTED) the composition is skewed to acidic residues. Positions 212 to 221 (AEGKKSEDDG) are enriched in basic and acidic residues. Residues 251-415 (QATDRLMKEL…VQIHEKNGWY (165 aa)) form the UBC core domain. Residue Cys351 is the Glycyl thioester intermediate of the active site.

The protein belongs to the ubiquitin-conjugating enzyme family. Monomer and homodimer. Only the homodimer is linked to ubiquitin through thiolester activation. Interacts (via N-terminus) with B4GALT1 (via N-terminal cytoplasmic domain). The interaction is direct. Post-translationally, autoubiquitinated in vitro in the presence of NEDD4L. Widely expressed.

The protein localises to the nucleus. The protein resides in the cell projection. It localises to the filopodium. It is found in the cytoplasm. Its subcellular location is the cytosol. The catalysed reaction is S-ubiquitinyl-[E1 ubiquitin-activating enzyme]-L-cysteine + [E2 ubiquitin-conjugating enzyme]-L-cysteine = [E1 ubiquitin-activating enzyme]-L-cysteine + S-ubiquitinyl-[E2 ubiquitin-conjugating enzyme]-L-cysteine.. The protein operates within protein modification; protein ubiquitination. Catalyzes the covalent attachment of ubiquitin to other proteins. May be involved in hormonal homeostasis in females. Involved in regulation of B4GALT1 cell surface expression, B4GALT1-mediated cell adhesion to laminin and embryoid body formation. This is Ubiquitin-conjugating enzyme E2 Q1 (UBE2Q1) from Homo sapiens (Human).